Consider the following 523-residue polypeptide: uncharacterized protein (523 aa).

The 255-residue stretch at 193–447 (RKCSGCGNCR…ALKRRMIGKR (255 aa)) folds into the Radical SAM core domain. [4Fe-4S] cluster contacts are provided by cysteine 212, cysteine 220, and cysteine 223.

It depends on [4Fe-4S] cluster as a cofactor.

This is an uncharacterized protein from Methanopyrus kandleri (strain AV19 / DSM 6324 / JCM 9639 / NBRC 100938).